Consider the following 187-residue polypeptide: Protein TIFY 3B (187 aa).

Residues 1–10 (MTKVKDEPRA) show a composition bias toward basic and acidic residues. A disordered region spans residues 1 to 50 (MTKVKDEPRASVEGGCGVADGDGGAAEIGGTGSVEKSINEVRSTEIQTAE). Residues 14 to 32 (GGCGVADGDGGAAEIGGTG) show a composition bias toward gly residues. The region spanning 51–86 (PTVPPNQLTIFFGGSVTVFDGLPSEKVQEILRIAAK) is the Tify domain. The short motif at 139-163 (PIARRHSLQRFLEKRRDRLVNKNPY) is the Jas element. The short motif at 141 to 148 (ARRHSLQR) is the Nuclear localization signal element. Residues 152 to 187 (KRRDRLVNKNPYPTSDFKKTDVPTGNVSIKEEFPTA) form a disordered region.

Belongs to the TIFY/JAZ family. Interacts with MYC2, AFPH2/NINJA, TIFY10A/JAZ1, TIFY10B/JAZ2, TIFY11A/JAZ5, TIFY11B/JAZ6, TIFY5A/JAZ8 and TIFY9/JAZ10. As to quaternary structure, (Microbial infection) Interacts with the pathogenic Pseudomonas syringae HopZ1a protein. In terms of processing, (Microbial infection) Acetylated by Pseudomonas syringae HopZ1a. Ubiquitinated. Targeted for degradation by the SCF(COI1) E3 ubiquitin ligase-proteasome pathway during jasmonate signaling.

Its subcellular location is the nucleus. Its function is as follows. Repressor of jasmonate responses. The protein is Protein TIFY 3B of Arabidopsis thaliana (Mouse-ear cress).